The primary structure comprises 273 residues: Putative pyruvate, phosphate dikinase regulatory protein (273 aa).

153 to 160 provides a ligand contact to ADP; sequence GISRTSKT.

It belongs to the pyruvate, phosphate/water dikinase regulatory protein family. PDRP subfamily.

It catalyses the reaction N(tele)-phospho-L-histidyl/L-threonyl-[pyruvate, phosphate dikinase] + ADP = N(tele)-phospho-L-histidyl/O-phospho-L-threonyl-[pyruvate, phosphate dikinase] + AMP + H(+). The catalysed reaction is N(tele)-phospho-L-histidyl/O-phospho-L-threonyl-[pyruvate, phosphate dikinase] + phosphate + H(+) = N(tele)-phospho-L-histidyl/L-threonyl-[pyruvate, phosphate dikinase] + diphosphate. Its function is as follows. Bifunctional serine/threonine kinase and phosphorylase involved in the regulation of the pyruvate, phosphate dikinase (PPDK) by catalyzing its phosphorylation/dephosphorylation. This is Putative pyruvate, phosphate dikinase regulatory protein from Rhizobium johnstonii (strain DSM 114642 / LMG 32736 / 3841) (Rhizobium leguminosarum bv. viciae).